A 323-amino-acid polypeptide reads, in one-letter code: Methenyltetrahydromethanopterin cyclohydrolase (323 aa).

The protein belongs to the MCH family.

The protein resides in the cytoplasm. The enzyme catalyses 5,10-methenyl-5,6,7,8-tetrahydromethanopterin + H2O = N(5)-formyl-5,6,7,8-tetrahydromethanopterin + H(+). The protein operates within one-carbon metabolism; methanogenesis from CO(2); 5,10-methenyl-5,6,7,8-tetrahydromethanopterin from CO(2): step 3/3. Catalyzes the reversible interconversion of 5-formyl-H(4)MPT to methenyl-H(4)MPT(+). This Methanobrevibacter smithii (strain ATCC 35061 / DSM 861 / OCM 144 / PS) protein is Methenyltetrahydromethanopterin cyclohydrolase.